A 312-amino-acid polypeptide reads, in one-letter code: MSAAELPPVVVLMGPTASGKSQLAIELANALDGEIVSVDSSLVYRGMDIGTAKPTPTERAAVPHHLIDVLDPSEVFSTGRFRDEALALIADITARGRLPVLAGGTMLYFNALLRGLAELPSADPDLRREIETRAARDGWHALHAELARIDPPAAARIHPNDPQRLQRALEVFYLTGRTLSDLCEGSRSPELPFRPLRIVLAPSSRAVLAERIAERFRRMLEEGFLEEVEALYRRGDLNETLPSIRAVGYRQAWGYLQGDYGFDTFVERAIIATRQFAKRQCTWLRKETEATWLETGTPGLSDRAAKEVRARL.

14-21 serves as a coordination point for ATP; sequence GPTASGKS. Residue 16 to 21 participates in substrate binding; sequence TASGKS. Interaction with substrate tRNA regions lie at residues 39–42 and 163–167; these read DSSL and QRLQR.

Belongs to the IPP transferase family. Monomer. Mg(2+) is required as a cofactor.

It carries out the reaction adenosine(37) in tRNA + dimethylallyl diphosphate = N(6)-dimethylallyladenosine(37) in tRNA + diphosphate. Catalyzes the transfer of a dimethylallyl group onto the adenine at position 37 in tRNAs that read codons beginning with uridine, leading to the formation of N6-(dimethylallyl)adenosine (i(6)A). This chain is tRNA dimethylallyltransferase, found in Methylococcus capsulatus (strain ATCC 33009 / NCIMB 11132 / Bath).